Consider the following 431-residue polypeptide: Lipoyl synthase 2, mitochondrial (431 aa).

Residues 21-43 are disordered; sequence SPLGKLQEERGEGVAKDPKKDKQ. The segment covering 26-40 has biased composition (basic and acidic residues); that stretch reads LQEERGEGVAKDPKK. Residues Cys127, Cys132, Cys138, Cys159, Cys163, Cys166, and Ser375 each coordinate [4Fe-4S] cluster. The Radical SAM core domain occupies 142-364; sequence DEEEGTATAT…EEEAMAMGFL (223 aa).

The protein belongs to the radical SAM superfamily. Lipoyl synthase family. Requires [4Fe-4S] cluster as cofactor.

It localises to the mitochondrion. The catalysed reaction is [[Fe-S] cluster scaffold protein carrying a second [4Fe-4S](2+) cluster] + N(6)-octanoyl-L-lysyl-[protein] + 2 oxidized [2Fe-2S]-[ferredoxin] + 2 S-adenosyl-L-methionine + 4 H(+) = [[Fe-S] cluster scaffold protein] + N(6)-[(R)-dihydrolipoyl]-L-lysyl-[protein] + 4 Fe(3+) + 2 hydrogen sulfide + 2 5'-deoxyadenosine + 2 L-methionine + 2 reduced [2Fe-2S]-[ferredoxin]. It participates in protein modification; protein lipoylation via endogenous pathway; protein N(6)-(lipoyl)lysine from octanoyl-[acyl-carrier-protein]: step 2/2. Its function is as follows. Catalyzes the radical-mediated insertion of two sulfur atoms into the C-6 and C-8 positions of the octanoyl moiety bound to the lipoyl domains of lipoate-dependent enzymes, thereby converting the octanoylated domains into lipoylated derivatives. This chain is Lipoyl synthase 2, mitochondrial, found in Trypanosoma cruzi (strain CL Brener).